The primary structure comprises 509 residues: Maturase K (509 aa).

It belongs to the intron maturase 2 family. MatK subfamily.

Its subcellular location is the plastid. The protein resides in the chloroplast. In terms of biological role, usually encoded in the trnK tRNA gene intron. Probably assists in splicing its own and other chloroplast group II introns. The chain is Maturase K from Austrocylindropuntia vestita (Cactus).